A 433-amino-acid polypeptide reads, in one-letter code: Serine--tRNA ligase (433 aa).

235-237 (TSE) provides a ligand contact to L-serine. 266–268 (RSE) is an ATP binding site. Position 289 (Glu-289) interacts with L-serine. 353-356 (EISS) lines the ATP pocket. Position 388 (Ser-388) interacts with L-serine.

This sequence belongs to the class-II aminoacyl-tRNA synthetase family. Type-1 seryl-tRNA synthetase subfamily. In terms of assembly, homodimer. The tRNA molecule binds across the dimer.

It localises to the cytoplasm. It carries out the reaction tRNA(Ser) + L-serine + ATP = L-seryl-tRNA(Ser) + AMP + diphosphate + H(+). The enzyme catalyses tRNA(Sec) + L-serine + ATP = L-seryl-tRNA(Sec) + AMP + diphosphate + H(+). It participates in aminoacyl-tRNA biosynthesis; selenocysteinyl-tRNA(Sec) biosynthesis; L-seryl-tRNA(Sec) from L-serine and tRNA(Sec): step 1/1. Catalyzes the attachment of serine to tRNA(Ser). Is also able to aminoacylate tRNA(Sec) with serine, to form the misacylated tRNA L-seryl-tRNA(Sec), which will be further converted into selenocysteinyl-tRNA(Sec). This Burkholderia pseudomallei (strain 668) protein is Serine--tRNA ligase.